A 259-amino-acid chain; its full sequence is Tryptophan synthase alpha chain (259 aa).

Active-site proton acceptor residues include Glu-35 and Asp-46.

Belongs to the TrpA family. As to quaternary structure, tetramer of two alpha and two beta chains.

The enzyme catalyses (1S,2R)-1-C-(indol-3-yl)glycerol 3-phosphate + L-serine = D-glyceraldehyde 3-phosphate + L-tryptophan + H2O. It functions in the pathway amino-acid biosynthesis; L-tryptophan biosynthesis; L-tryptophan from chorismate: step 5/5. The alpha subunit is responsible for the aldol cleavage of indoleglycerol phosphate to indole and glyceraldehyde 3-phosphate. In Methanococcus maripaludis (strain C7 / ATCC BAA-1331), this protein is Tryptophan synthase alpha chain.